A 642-amino-acid polypeptide reads, in one-letter code: Pentatricopeptide repeat-containing protein At3g16010 (642 aa).

PPR repeat units lie at residues 125–159 (DCST…TYVS), 161–195 (SPAV…KCKP), 196–230 (TSST…GDCF), 232–266 (DTIT…CMQP), 267–301 (TEKI…GCSP), 302–336 (TVYT…GLTP), 337–371 (DVVF…RCTP), 372–407 (TVVS…SVSP), 408–442 (SEFT…GFPP), 443–473 (CPAA…LKEN), 478–512 (SSRV…GSGP), 513–547 (DVYA…GCRA), 548–582 (DINS…GIKP), and 583–617 (DGVT…GFEY).

Belongs to the PPR family. P subfamily.

This Arabidopsis thaliana (Mouse-ear cress) protein is Pentatricopeptide repeat-containing protein At3g16010.